The primary structure comprises 261 residues: Carbonic anhydrase 1 (261 aa).

Residues 1-31 (MASPDWGYDDKNGPEQWSKLYPIANGNNQSP) are disordered. Ala2 is modified (N-acetylalanine). The 258-residue stretch at 4–261 (PDWGYDDKNG…LKGRTVRASF (258 aa)) folds into the Alpha-carbonic anhydrase domain. The active-site Proton donor/acceptor is the His65. His65, His68, His95, His97, and His120 together coordinate Zn(2+). Substrate contacts are provided by residues Thr200 and 200 to 201 (TH). His201 is a binding site for Zn(2+). Residues 241 to 261 (PMQHNNRPTQPLKGRTVRASF) are disordered.

This sequence belongs to the alpha-carbonic anhydrase family. Requires Zn(2+) as cofactor.

The protein localises to the cytoplasm. The enzyme catalyses hydrogencarbonate + H(+) = CO2 + H2O. The catalysed reaction is urea = cyanamide + H2O. Activated by histamine, imidazole, L-adrenaline, L- and D-histidine, and L- and D-phenylalanine. Inhibited by coumarins, sulfonamide derivatives such as acetazolamide, benzenesulfonamide and derivatives (4-carboxyethylbenzene-sulfonamide, 4-carboxyethylbenzene-sulfonamide ethyl ester, 4-(acetyl-2-aminoethyl)benzene-sulfonamide, 4-aminoethylbenzene-sulfonamide), and 'prong inhibitors' BR15, BR17, BR22 and BR30. Activated by a short exposition to Foscarnet (phosphonoformate trisodium salt), but inhibited by a long one. Esterase activity weakly reduced by cyanamide. Catalyzes the reversible hydration of carbon dioxide. Can hydrate cyanamide to urea. In Homo sapiens (Human), this protein is Carbonic anhydrase 1 (CA1).